We begin with the raw amino-acid sequence, 156 residues long: Ribosomal RNA large subunit methyltransferase H (156 aa).

S-adenosyl-L-methionine contacts are provided by residues L73, G104, and 123 to 128 (IGPLTL).

This sequence belongs to the RNA methyltransferase RlmH family. In terms of assembly, homodimer.

It localises to the cytoplasm. It catalyses the reaction pseudouridine(1915) in 23S rRNA + S-adenosyl-L-methionine = N(3)-methylpseudouridine(1915) in 23S rRNA + S-adenosyl-L-homocysteine + H(+). In terms of biological role, specifically methylates the pseudouridine at position 1915 (m3Psi1915) in 23S rRNA. The protein is Ribosomal RNA large subunit methyltransferase H of Xanthomonas euvesicatoria pv. vesicatoria (strain 85-10) (Xanthomonas campestris pv. vesicatoria).